We begin with the raw amino-acid sequence, 123 residues long: MRFGRLLLLAVLLAGVSQLPAVSGRKKGEKPGGCPPDDGPCLLSVPDQCTDDSQCPSTMKCCPRACFRQCIPRVSVKLGSCPVDQLHCLSPTKHLCHQDSNCSGKKRCCPTACGRDCRDPVKE.

An N-terminal signal peptide occupies residues 1 to 24; it reads MRFGRLLLLAVLLAGVSQLPAVSG. WAP domains follow at residues 27–74 and 75–121; these read KGEK…IPRV and SVKL…RDPV. 8 disulfide bridges follow: C34–C62, C41–C66, C49–C61, C55–C70, C81–C109, C88–C113, C96–C108, and C102–C117.

It is found in the secreted. In terms of biological role, putative acid-stable proteinase inhibitor. The sequence is that of WAP four-disulfide core domain protein 5 (WFDC5) from Otolemur garnettii (Small-eared galago).